The chain runs to 223 residues: Neurotrophic factor BDNF precursor form (223 aa).

The first 5 residues, 1–5 (SCMKA), serve as a signal peptide directing secretion. Positions 6 to 114 (APMKEVSIRG…AANMSMRVRR (109 aa)) are excised as a propeptide. An N-linked (GlcNAc...) asparagine glycan is attached at Asn-107. 2 disulfides stabilise this stretch: Cys-127–Cys-194 and Cys-172–Cys-223.

Belongs to the NGF-beta family.

It localises to the secreted. Functionally, promotes the survival of neuronal populations that are all located either in the central nervous system or directly connected to it. The protein is Neurotrophic factor BDNF precursor form (BDNF) of Calabaria reinhardtii (Calabar boa).